Here is a 402-residue protein sequence, read N- to C-terminus: Chorismate synthase (402 aa).

NADP(+)-binding residues include Arg-40 and Arg-46. FMN-binding positions include 134–136, 255–256, Gly-299, 314–318, and Arg-340; these read RAS, QA, and KPIAT.

This sequence belongs to the chorismate synthase family. As to quaternary structure, homotetramer. The cofactor is FMNH2.

The catalysed reaction is 5-O-(1-carboxyvinyl)-3-phosphoshikimate = chorismate + phosphate. It participates in metabolic intermediate biosynthesis; chorismate biosynthesis; chorismate from D-erythrose 4-phosphate and phosphoenolpyruvate: step 7/7. Its function is as follows. Catalyzes the anti-1,4-elimination of the C-3 phosphate and the C-6 proR hydrogen from 5-enolpyruvylshikimate-3-phosphate (EPSP) to yield chorismate, which is the branch point compound that serves as the starting substrate for the three terminal pathways of aromatic amino acid biosynthesis. This reaction introduces a second double bond into the aromatic ring system. This is Chorismate synthase from Leifsonia xyli subsp. xyli (strain CTCB07).